The primary structure comprises 103 residues: Small ribosomal subunit protein uS10 (103 aa).

It belongs to the universal ribosomal protein uS10 family. As to quaternary structure, part of the 30S ribosomal subunit.

Functionally, involved in the binding of tRNA to the ribosomes. The chain is Small ribosomal subunit protein uS10 from Actinobacillus pleuropneumoniae serotype 5b (strain L20).